Here is a 466-residue protein sequence, read N- to C-terminus: Asparagine--tRNA ligase (466 aa).

The protein belongs to the class-II aminoacyl-tRNA synthetase family. In terms of assembly, homodimer.

It is found in the cytoplasm. It carries out the reaction tRNA(Asn) + L-asparagine + ATP = L-asparaginyl-tRNA(Asn) + AMP + diphosphate + H(+). The chain is Asparagine--tRNA ligase from Shewanella loihica (strain ATCC BAA-1088 / PV-4).